The following is a 270-amino-acid chain: NADPH-dependent 7-cyano-7-deazaguanine reductase (270 aa).

79–81 serves as a coordination point for substrate; that stretch reads IES. NADPH is bound at residue 81–82; sequence SK. Residue Cys-177 is the Thioimide intermediate of the active site. Asp-184 serves as the catalytic Proton donor. 216 to 217 contacts substrate; the sequence is HE. 245-246 serves as a coordination point for NADPH; it reads RG.

The protein belongs to the GTP cyclohydrolase I family. QueF type 2 subfamily. As to quaternary structure, homodimer.

It localises to the cytoplasm. It carries out the reaction 7-aminomethyl-7-carbaguanine + 2 NADP(+) = 7-cyano-7-deazaguanine + 2 NADPH + 3 H(+). It participates in tRNA modification; tRNA-queuosine biosynthesis. In terms of biological role, catalyzes the NADPH-dependent reduction of 7-cyano-7-deazaguanine (preQ0) to 7-aminomethyl-7-deazaguanine (preQ1). The polypeptide is NADPH-dependent 7-cyano-7-deazaguanine reductase (Acinetobacter baumannii (strain ATCC 17978 / DSM 105126 / CIP 53.77 / LMG 1025 / NCDC KC755 / 5377)).